The following is a 2008-amino-acid chain: MSFREIKAGEKAKHPEDHGKKQSSSWINGMENSTQASTSVEKRNHHWRSYKLIIDPALKKGQHKLYRYDGQHFSMPNSGIAPVDCVRDPRIGRIWTKTKELELSVPKFKIDEFYVGPVPPKQVTFAKLNDNIRENFLTDMCKKYGEVEEVEILYNPKNKKHLGIAKVIFATVKGAREAVQHLHNTSVMGNIIHVELDTKGETRMRFYELLVNGLYTPQTLPVGTEQDASPTVNETLQLTDSLKRLKDSNLSSVGSSVTPNSSTPFSHDTAYSSCRQDTPNSFSQFTPQSQGTPHTPRLGTPFSQDSTYSSRQTTPVYHFGQDSGYKHRRHETKFTDAYNRRPGGHHYVHNSPGVFRGTEHQFSTFKSHQQEPVQFSHTPPLSHSSSSSYKSAFSPYQAPAVFPQSEEQPFAQTSREAEYRRPAPPPAEMVVESSAATSADFAPVKEKPEEPPPLPDSNSAPEPSAPSFSQTPERSETPGTPTMESEMQHNSLDSRIEMLLKEQRTKLPFLNEHDSDNEVRMEGSPISSSSSQLSPIPMYGSNSQPGYRAQTPSSRPSSTGLEDISPTPLPDSDDDEPIPGTASLNQNSRGTSEASMTPIDQLNRASKVETLEVKEMVPGDQTPTSEKMDESQHSSGEDMEISDDEMNSAPITSAECAKTIVVNSSVSNAAVMAPSIPPLPPPPGFPPLPPPPPPPPQPAFPMPPPLPPPPPPTHPAVTVPPPPLPAPPGVPPPHILPPLPPFHPGMFPVMQVDMISVLGNHWGGMPMSFQMQTQMLSRMMQAQNTYQYPPFMGGRMQFVNLPPYRPFSMGAARGRGQQWPPLPKFDPSVPPPGYEPKKEDPHKATVDGVLLVIVKELKAIMKRDLNRKMVEVVAFRAFDDWWDKKERLAKASLTPVKSGGELEEKPKPKDRITSCLLENWNKGEGLGYEGIGLGIGLRGAIRLPSFKVKRKEPPEAASAGDQKRIRPSTSVDDEDEESERDRDASDTTSDLSKKDAEAVGLRRRPARPLELDSEGEEGDETSGKEEESSSEKEEEQEEEGGLVKAAPGKEEEEDEDDEEDEDDDEDEEDEEDYEETGVETSDKEEEQDSEEEDAASPSSSKAEVESSDESEDSSEFESSSDSDEDDDEEEEEEEDEEEEEEEEVAEDQDREAMVAETEHEPASHELPDDKRETILELYPVDYMDATGLGLSEPALVEKDEGMEEVKAEESECDQVPEESIAAETLKQLVMERDQETKLALSPICRPVEEPEPIVMLEPEVQECPKPESQDEAGTVCLSTPVAVFGEARPSKSSFFSKSDDSCLETHVKTKLPSAVEEEDRLPRTPGREVVVHSETDILLLPAHKVPSSTVPLPSTPGKEESVVPPEKFPEQLMVTKTSIEEEIPRTPGRDILAKSSHPLGKSQSTDTVPATPGSDAPLTGSSLTLSSPQVPGSPFSYPSQSPGINSGIPRTPGRDFNFTPTFPEAGATIPCLLSGKKQSEDDLDEKPFKEPLGASLTISMNSVPSPIPFASPTQADFRTDMGLPPNEPIPIAALPCIPGDGRMPIEECKAEVKSVLLSPEAPVGASILPPPPPHSVLPKRRPGRPRRSPPSVLSLDMYSGKTIEPPPVPVALVESAMSKELLSAHPDAFYGLKDPEAVTLDFRNDSFHEKIAAETVAEKLPFKELENQWNEDFKEEEAHAKPKRQWRRQKKSPEHLPVIPSPEYSPPQPQFRPRSEFEEMTILYDIWNGGIDEEDIKFMCITYDRLLQQDNGMDWLNDTLWVFHPSTSFSTPKKKKRDDGMREHVTGCARSEGYYKIDKKDKLKYLNNSRAFAEEPPADTQGMSIPAQPHASTRAGSERRSEQRRLLSSFTGSCDSDLLKFNQLKFRKKKLKFCKSHIHDWGLFAMEPIAADEMVIEYVGQNIRQVIADMREKRYEDEGIGSSYMFRVDHDTIIDATKCGNFARFINHSCNPNCYAKVITVESQKKIVIYSKQHINVNEEITYDYKFPIEDVKIPCLCGSENCRGTLN.

The segment covering 1 to 20 has biased composition (basic and acidic residues); that stretch reads MSFREIKAGEKAKHPEDHGK. The disordered stretch occupies residues 1-42; sequence MSFREIKAGEKAKHPEDHGKKQSSSWINGMENSTQASTSVEK. The span at 22-39 shows a compositional bias: polar residues; it reads QSSSWINGMENSTQASTS. The region spanning 111-199 is the RRM domain; that stretch reads DEFYVGPVPP…NIIHVELDTK (89 aa). Disordered regions lie at residues 249-390, 402-652, 682-725, 950-1172, 1309-1328, 1345-1461, 1563-1600, 1674-1712, and 1814-1842; these read NLSS…SSYK, FPQS…APIT, PPGF…PPLP, RKEP…DKRE, TKLP…PGRE, VPSS…FTPT, VGAS…MYSG, KEEE…PQFR, and EEPP…RRSE. Residues 251 to 264 are compositionally biased toward low complexity; sequence SSVGSSVTPNSSTP. Polar residues-rich tracts occupy residues 265 to 293, 301 to 315, 360 to 381, 405 to 414, and 456 to 491; these read FSHD…QGTP, PFSQ…QTTP, HQFS…TPPL, SEEQPFAQTS, and DSNS…QHNS. Basic and acidic residues predominate over residues 492 to 521; the sequence is LDSRIEMLLKEQRTKLPFLNEHDSDNEVRM. The segment covering 524–537 has biased composition (low complexity); that stretch reads SPISSSSSQLSPIP. Polar residues-rich tracts occupy residues 540–560 and 582–604; these read GSNS…SSTG and ASLN…QLNR. Composition is skewed to basic and acidic residues over residues 606-617 and 626-636; these read SKVETLEVKEMV and EKMDESQHSSG. The segment covering 637 to 646 has biased composition (acidic residues); that stretch reads EDMEISDDEM. Over residues 979-997 the composition is skewed to basic and acidic residues; it reads ERDRDASDTTSDLSKKDAE. The segment covering 1011-1020 has biased composition (acidic residues); that stretch reads LDSEGEEGDE. A compositionally biased stretch (basic and acidic residues) spans 1021–1031; that stretch reads TSGKEEESSSE. Acidic residues-rich tracts occupy residues 1050–1094 and 1105–1149; these read EEEE…EEDA and ESSD…EDQD. Residues 1150–1172 are compositionally biased toward basic and acidic residues; sequence REAMVAETEHEPASHELPDDKRE. Positions 1345 to 1356 are enriched in low complexity; sequence VPSSTVPLPSTP. A compositionally biased stretch (basic and acidic residues) spans 1378-1392; it reads SIEEEIPRTPGRDIL. Low complexity predominate over residues 1418–1427; sequence LTGSSLTLSS. Basic residues-rich tracts occupy residues 1577–1587 and 1681–1690; these read LPKRRPGRPRR and KPKRQWRRQK. The span at 1699-1710 shows a compositional bias: pro residues; sequence IPSPEYSPPQPQ. Positions 1840–1845 match the RxxxRR motif motif; it reads RSEQRR. In terms of domain architecture, SET spans 1869–1986; it reads KKLKFCKSHI…VNEEITYDYK (118 aa). Residue tyrosine 1985 coordinates S-adenosyl-L-methionine. The Post-SET domain maps to 1992–2008; that stretch reads VKIPCLCGSENCRGTLN.

It belongs to the class V-like SAM-binding methyltransferase superfamily. Component of the SET1B/COMPASS complex.

It localises to the nucleus speckle. It is found in the chromosome. It catalyses the reaction L-lysyl(4)-[histone H3] + 3 S-adenosyl-L-methionine = N(6),N(6),N(6)-trimethyl-L-lysyl(4)-[histone H3] + 3 S-adenosyl-L-homocysteine + 3 H(+). Histone methyltransferase that specifically methylates 'Lys-4' of histone H3, when part of the SET1 histone methyltransferase (HMT) complex, but not if the neighboring 'Lys-9' residue is already methylated. H3 'Lys-4' methylation represents a specific tag for epigenetic transcriptional activation. The protein is Histone-lysine N-methyltransferase SETD1B (SETD1B) of Gallus gallus (Chicken).